Consider the following 142-residue polypeptide: ATP synthase epsilon chain (142 aa).

Belongs to the ATPase epsilon chain family. In terms of assembly, F-type ATPases have 2 components, CF(1) - the catalytic core - and CF(0) - the membrane proton channel. CF(1) has five subunits: alpha(3), beta(3), gamma(1), delta(1), epsilon(1). CF(0) has three main subunits: a, b and c.

It is found in the cell inner membrane. Functionally, produces ATP from ADP in the presence of a proton gradient across the membrane. This is ATP synthase epsilon chain from Shewanella putrefaciens (strain CN-32 / ATCC BAA-453).